The chain runs to 132 residues: Glycine cleavage system H protein (132 aa).

The Lipoyl-binding domain occupies Ile-24–Arg-106. Lys-65 is subject to N6-lipoyllysine.

This sequence belongs to the GcvH family. In terms of assembly, the glycine cleavage system is composed of four proteins: P, T, L and H. (R)-lipoate serves as cofactor.

Its function is as follows. The glycine cleavage system catalyzes the degradation of glycine. The H protein shuttles the methylamine group of glycine from the P protein to the T protein. This Rippkaea orientalis (strain PCC 8801 / RF-1) (Cyanothece sp. (strain PCC 8801)) protein is Glycine cleavage system H protein.